The primary structure comprises 366 residues: RISC-loading complex subunit TARBP2 (366 aa).

3 sufficient for interaction with PRKRA regions span residues 22–105 (MLAA…EPAL), 152–234 (SPQQ…DARD), and 287–366 (LGAL…AGSK). The region spanning 30-97 (TPISLLQEYG…AEVALKHLKG (68 aa)) is the DRBM 1 domain. S152 carries the post-translational modification Phosphoserine. DRBM domains follow at residues 159 to 227 (NPVG…RVHT) and 293 to 361 (ACCR…YLKI). The segment at 228-366 (VPLDARDGNE…QYLKIMAGSK (139 aa)) is sufficient for interaction with DICER1.

It belongs to the TARBP2 family. In terms of assembly, self-associates. Component of the RISC loading complex (RLC), or micro-RNA (miRNA) loading complex (miRLC), which is composed of DICER1, AGO2 and TARBP2. Note that the trimeric RLC/miRLC is also referred to as RISC. Interacts with EIF2AK2/PKR and inhibits its protein kinase activity. Interacts with DHX9 and PRKRA. Interacts with DICER1, AGO2, MOV10, EIF6 and RPL7A (60S ribosome subunit); they form a large RNA-induced silencing complex (RISC). Interacts with IRF7; this interaction prevents IRF7 phosphorylation and activation. As to quaternary structure, (Microbial infection) Interacts with FTSJ3; forms a complex with FTSJ3 and HIV-1 TAR RNA. (Microbial infection) Interacts with ebolavirus VP30; this interaction, which occurs only in the presence of siRNA, prevents TARBP2 binding to DICER1 and thus allows the virus to counteract host RNA silencing. In terms of assembly, (Microbial infection) Interacts with ebolavirus VP35; this interaction prevents TARBP2 binding to DICER1 and thus allows the virus to counteract host RNA silencing.

It localises to the cytoplasm. The protein localises to the perinuclear region. Its subcellular location is the nucleus. Required for formation of the RNA induced silencing complex (RISC). Component of the RISC loading complex (RLC), also known as the micro-RNA (miRNA) loading complex (miRLC), which is composed of DICER1, AGO2 and TARBP2. Within the RLC/miRLC, DICER1 and TARBP2 are required to process precursor miRNAs (pre-miRNAs) to mature miRNAs and then load them onto AGO2. AGO2 bound to the mature miRNA constitutes the minimal RISC and may subsequently dissociate from DICER1 and TARBP2. May also play a role in the production of short interfering RNAs (siRNAs) from double-stranded RNA (dsRNA) by DICER1. Binds in vitro to the PRM1 3'-UTR. Seems to act as a repressor of translation. For some pre-miRNA substrates, may also alter the choice of cleavage site by DICER1. Negatively regulates IRF7-mediated IFN-beta signaling triggered by viral infection by inhibiting the phosphorylation of IRF7 and promoting its 'Lys'-48-linked ubiquitination and degradation. Its function is as follows. (Microbial infection) Binds to the HIV-1 TAR RNA which is located in the long terminal repeat (LTR) of HIV-1, and stimulates translation of TAR-containing RNAs. This is achieved in part at least by binding to and inhibiting EIF2AK2/PKR, thereby reducing phosphorylation and inhibition of EIF2S1/eIF-2-alpha. May also promote translation of TAR-containing RNAs independently of EIF2AK2/PKR. Mediates recruitment of FTSJ3 methyltransferase to HIV-1 RNA, leading to 2'-O-methylation of the viral genome, allowing HIV-1 to escape the innate immune system. The polypeptide is RISC-loading complex subunit TARBP2 (Homo sapiens (Human)).